Here is a 2098-residue protein sequence, read N- to C-terminus: Non-reducing polyketide synthase crz7 (2098 aa).

In terms of domain architecture, Starter acyltransferase (SAT) spans 8–243 (ILFGDQTVDP…IKLPITAAFH (236 aa)). One can recognise a Ketosynthase family 3 (KS3) domain in the interval 364–789 (SSDIAIIGFA…GGNTSLLLED (426 aa)). Residues C532, H667, and H706 each act as for beta-ketoacyl synthase activity in the active site. The Malonyl-CoA:ACP transacylase (MAT) domain maps to 887 to 1211 (IFLFTGQGSQ…IANAYNSGVK (325 aa)). Positions 1270 to 1404 (TCLQGVENET…CTVMYGDGQQ (135 aa)) are N-terminal hotdog fold. Positions 1270–1578 (TCLQGVENET…FQQMKRTTLQ (309 aa)) constitute a PKS/mFAS DH domain. The active-site Proton acceptor; for dehydratase activity is the H1305. Positions 1431–1578 (IHRMLKEMIY…FQQMKRTTLQ (148 aa)) are C-terminal hotdog fold. D1491 functions as the Proton donor; for dehydratase activity in the catalytic mechanism. The Carrier 1 domain occupies 1613–1690 (QSPSAGFSKV…ELRAFFLDKM (78 aa)). S1650 is subject to O-(pantetheine 4'-phosphoryl)serine. The tract at residues 1693 to 1725 (PQATANDDDSDDSSEDEDPGYSRSQSNSTISTP) is disordered. Residues 1698-1711 (NDDDSDDSSEDEDP) show a composition bias toward acidic residues. Residues 1714–1724 (SRSQSNSTIST) show a composition bias toward polar residues. The Carrier 2 domain occupies 1725–1802 (PEEPDVVSIL…DVQKALGPTS (78 aa)). The residue at position 1762 (S1762) is an O-(pantetheine 4'-phosphoryl)serine. The thioesterase (TE) domain stretch occupies residues 1844–2080 (LFLLPDGAGS…VSGNHFSIMF (237 aa)).

Pantetheine 4'-phosphate is required as a cofactor.

It functions in the pathway secondary metabolite biosynthesis. Non-reducing polyketide synthase; part of the gene cluster that mediates the biosynthesis of the red pigment cristazarin, a naphthazarin derivative. The polyketide product of crz7 is likely 2-acetyl-1,3,6,8-tetrahydoxynaphthalene (AT4HN) from which a probable biosynthetic route of cristazarin can be deduced. The presence of two O-methyltransferases (crz1 and crz2), an enoyl reductase (crz5), an oxidase (crz8), and a short-chain dehydrogenase (crz9) encoded in the cristazarin biosynthetic cluster is consistent with methylation of a hydroxyl group, addition of two hydroxyl groups to the naphthalene core ring, and reduction of the acetyl side chain. The sequence is that of Non-reducing polyketide synthase crz7 from Cladonia metacorallifera (Lichen-forming fungus).